The sequence spans 394 residues: Elongation factor Tu (394 aa).

One can recognise a tr-type G domain in the interval 10-204 (KPHINVGTIG…FLDTYIPEPK (195 aa)). Positions 19 to 26 (GHVDHGKT) are G1. 19-26 (GHVDHGKT) provides a ligand contact to GTP. T26 lines the Mg(2+) pocket. Residues 60–64 (GITIN) form a G2 region. The tract at residues 81-84 (DCPG) is G3. Residues 81–85 (DCPGH) and 136–139 (NKCD) contribute to the GTP site. The interval 136-139 (NKCD) is G4. The interval 174–176 (SAL) is G5.

It belongs to the TRAFAC class translation factor GTPase superfamily. Classic translation factor GTPase family. EF-Tu/EF-1A subfamily. As to quaternary structure, monomer.

The protein resides in the cytoplasm. It catalyses the reaction GTP + H2O = GDP + phosphate + H(+). GTP hydrolase that promotes the GTP-dependent binding of aminoacyl-tRNA to the A-site of ribosomes during protein biosynthesis. The chain is Elongation factor Tu from Buchnera aphidicola subsp. Schizaphis graminum (strain Sg).